The following is a 265-amino-acid chain: Methylthioribulose-1-phosphate dehydratase (265 aa).

Cysteine 116 provides a ligand contact to substrate. Zn(2+)-binding residues include histidine 134 and histidine 136. Glutamate 159 (proton donor/acceptor) is an active-site residue. Histidine 224 provides a ligand contact to Zn(2+).

The protein belongs to the aldolase class II family. MtnB subfamily. Zn(2+) is required as a cofactor.

It is found in the cytoplasm. It carries out the reaction 5-(methylsulfanyl)-D-ribulose 1-phosphate = 5-methylsulfanyl-2,3-dioxopentyl phosphate + H2O. Its pathway is amino-acid biosynthesis; L-methionine biosynthesis via salvage pathway; L-methionine from S-methyl-5-thio-alpha-D-ribose 1-phosphate: step 2/6. Functionally, catalyzes the dehydration of methylthioribulose-1-phosphate (MTRu-1-P) into 2,3-diketo-5-methylthiopentyl-1-phosphate (DK-MTP-1-P). The protein is Methylthioribulose-1-phosphate dehydratase of Debaryomyces hansenii (strain ATCC 36239 / CBS 767 / BCRC 21394 / JCM 1990 / NBRC 0083 / IGC 2968) (Yeast).